Reading from the N-terminus, the 677-residue chain is Methionine--tRNA ligase (677 aa).

The 'HIGH' region signature appears at 15-25 (PYANGSIHLGH). Residues Cys-146, Cys-149, Cys-159, and Cys-162 each contribute to the Zn(2+) site. A 'KMSKS' region motif is present at residues 333 to 337 (KMSKS). Position 336 (Lys-336) interacts with ATP. Positions 575–677 (DFAKIDLRVA…DGAKPGQQVK (103 aa)) constitute a tRNA-binding domain.

This sequence belongs to the class-I aminoacyl-tRNA synthetase family. MetG type 1 subfamily. As to quaternary structure, homodimer. It depends on Zn(2+) as a cofactor.

It is found in the cytoplasm. The enzyme catalyses tRNA(Met) + L-methionine + ATP = L-methionyl-tRNA(Met) + AMP + diphosphate. Functionally, is required not only for elongation of protein synthesis but also for the initiation of all mRNA translation through initiator tRNA(fMet) aminoacylation. This is Methionine--tRNA ligase from Salmonella agona (strain SL483).